Reading from the N-terminus, the 176-residue chain is Disulfide bond formation protein B (176 aa).

The Cytoplasmic segment spans residues 1-14 (MMRSLNRCSKHRAA). The helical transmembrane segment at 15-31 (WLLLALTTFSLELVALY) threads the bilayer. Residues 32–49 (FQHVMLLKPCVLCVYQRC) lie on the Periplasmic side of the membrane. An intrachain disulfide couples C41 to C44. Residues 50–65 (ALYGVVAAGLVGAIAP) traverse the membrane as a helical segment. The Cytoplasmic segment spans residues 66–71 (ATPLRF). A helical transmembrane segment spans residues 72–89 (SGLAIWLYSAWEGLQLAM). Residues 90-144 (KHTDIQLHPSPFVTCDFFVSFPAWLPLDKWLPSVFSASGDCAVRQWHFLSLEMPQ) are Periplasmic-facing. C104 and C130 are disulfide-bonded. Residues 145–163 (WMIVIFGAYLAVAVLILLA) traverse the membrane as a helical segment. Residues 164-176 (QFFPPRKRDLFSR) are Cytoplasmic-facing.

This sequence belongs to the DsbB family.

It is found in the cell inner membrane. Its function is as follows. Required for disulfide bond formation in some periplasmic proteins. Acts by oxidizing the DsbA protein. The protein is Disulfide bond formation protein B of Sodalis glossinidius (strain morsitans).